The primary structure comprises 389 residues: Chaperone protein DnaJ (389 aa).

One can recognise a J domain in the interval Asp6–Gly70. A CR-type zinc finger spans residues Gly131–Arg213. Residues Cys144, Cys147, Cys161, Cys164, Cys187, Cys190, Cys201, and Cys204 each contribute to the Zn(2+) site. 4 CXXCXGXG motif repeats span residues Cys144–Gly151, Cys161–Gly168, Cys187–Gly194, and Cys201–Gly208. The tract at residues Ser145–Thr167 is disordered. The tract at residues Leu351 to Ser389 is disordered. The span at Lys355–Ser389 shows a compositional bias: basic and acidic residues.

The protein belongs to the DnaJ family. In terms of assembly, homodimer. Zn(2+) is required as a cofactor.

The protein localises to the cytoplasm. Functionally, participates actively in the response to hyperosmotic and heat shock by preventing the aggregation of stress-denatured proteins and by disaggregating proteins, also in an autonomous, DnaK-independent fashion. Unfolded proteins bind initially to DnaJ; upon interaction with the DnaJ-bound protein, DnaK hydrolyzes its bound ATP, resulting in the formation of a stable complex. GrpE releases ADP from DnaK; ATP binding to DnaK triggers the release of the substrate protein, thus completing the reaction cycle. Several rounds of ATP-dependent interactions between DnaJ, DnaK and GrpE are required for fully efficient folding. Also involved, together with DnaK and GrpE, in the DNA replication of plasmids through activation of initiation proteins. This chain is Chaperone protein DnaJ, found in Methanosarcina mazei (strain ATCC BAA-159 / DSM 3647 / Goe1 / Go1 / JCM 11833 / OCM 88) (Methanosarcina frisia).